The primary structure comprises 437 residues: Glucose-1-phosphate adenylyltransferase (437 aa).

Residues Tyr-113, Gly-179, 194–195 (EK), and Ser-212 contribute to the alpha-D-glucose 1-phosphate site.

This sequence belongs to the bacterial/plant glucose-1-phosphate adenylyltransferase family. As to quaternary structure, homotetramer.

It carries out the reaction alpha-D-glucose 1-phosphate + ATP + H(+) = ADP-alpha-D-glucose + diphosphate. The protein operates within glycan biosynthesis; glycogen biosynthesis. Its function is as follows. Involved in the biosynthesis of ADP-glucose, a building block required for the elongation reactions to produce glycogen. Catalyzes the reaction between ATP and alpha-D-glucose 1-phosphate (G1P) to produce pyrophosphate and ADP-Glc. This Haemophilus influenzae (strain ATCC 51907 / DSM 11121 / KW20 / Rd) protein is Glucose-1-phosphate adenylyltransferase.